Here is a 555-residue protein sequence, read N- to C-terminus: Glucose-6-phosphate isomerase (555 aa).

D-glucose 6-phosphate-binding positions include 169-170 (GS), 219-224 (SKTFTT), Q364, E368, H399, and K521. Catalysis depends on E368, which acts as the Proton donor. Catalysis depends on residues H399 and K521.

This sequence belongs to the GPI family. In terms of assembly, homodimer.

Its subcellular location is the cytoplasm. It is found in the cytosol. The enzyme catalyses alpha-D-glucose 6-phosphate = beta-D-fructose 6-phosphate. It functions in the pathway carbohydrate degradation; glycolysis; D-glyceraldehyde 3-phosphate and glycerone phosphate from D-glucose: step 2/4. In terms of biological role, in the cytoplasm, catalyzes the conversion of glucose-6-phosphate to fructose-6-phosphate, the second step in glycolysis, and the reverse reaction during gluconeogenesis. The chain is Glucose-6-phosphate isomerase (RAG2) from Kluyveromyces lactis (strain ATCC 8585 / CBS 2359 / DSM 70799 / NBRC 1267 / NRRL Y-1140 / WM37) (Yeast).